The sequence spans 96 residues: Protein RnfH (96 aa).

It belongs to the UPF0125 (RnfH) family.

In Escherichia fergusonii (strain ATCC 35469 / DSM 13698 / CCUG 18766 / IAM 14443 / JCM 21226 / LMG 7866 / NBRC 102419 / NCTC 12128 / CDC 0568-73), this protein is Protein RnfH.